Here is a 120-residue protein sequence, read N- to C-terminus: UPF0145 protein Mboo_1021 (120 aa).

Belongs to the UPF0145 family.

The protein is UPF0145 protein Mboo_1021 of Methanoregula boonei (strain DSM 21154 / JCM 14090 / 6A8).